The chain runs to 792 residues: MDSKESLAPPGRDEVPSSLLGRGRGSVMDLYKTLRGGATVKVSASSPSVAAASQADSKQQRILLDFSKGSASNAQQQQQQQQQQQQQQQQQPQPDLSKAVSLSMGLYMGETETKVMGNDLGYPQQGQLGLSSGETDFRLLEESIANLNRSTSRPENPKSSTPAAGCATPTEKEFPQTHSDPSSEQQNRKSQPGTNGGSVKLYTTDQSTFDILQDLEFSAGSPGKETNESPWRSDLLIDENLLSPLAGEDDPFLLEGDVNEDCKPLILPDTKPKIQDTGDTILSSPSSVALPQVKTEKDDFIELCTPGVIKQEKLGPVYCQASFSGTNIIGNKMSAISVHGVSTSGGQMYHYDMNTASLSQQQDQKPVFNVIPPIPVGSENWNRCQGSGEDNLTSLGAMNFAGRSVFSNGYSSPGMRPDVSSPPSSSSTATGPPPKLCLVCSDEASGCHYGVLTCGSCKVFFKRAVEGQHNYLCAGRNDCIIDKIRRKNCPACRYRKCLQAGMNLEARKTKKKIKGIQQATAGVSQDTSENANKTIVPAALPQLTPTLVSLLEVIEPEVLYAGYDSSVPDSAWRIMTTLNMLGGRQVIAAVKWAKAIPGFRNLHLDDQMTLLQYSWMFLMAFALGWRSYRQASGNLLCFAPDLIINEQRMTLPCMYDQCKHMLFISTELQRLQVSYEEYLCMKTLLLLSSVPKEGLKSQELFDEIRMTYIKELGKAIVKREGNSSQNWQRFYQLTKLLDSMHDVVENLLSYCFQTFLDKSMSIEFPEMLAEIITNQIPKYSNGNIKKLLFHQK.

The span at 1–15 shows a compositional bias: basic and acidic residues; that stretch reads MDSKESLAPPGRDEV. The interval 1-25 is disordered; the sequence is MDSKESLAPPGRDEVPSSLLGRGRG. Residues 1–436 form a modulating region; that stretch reads MDSKESLAPP…STATGPPPKL (436 aa). An Omega-N-methylarginine modification is found at arginine 24. Phosphoserine is present on serine 46. A disordered region spans residues 67–98; sequence SKGSASNAQQQQQQQQQQQQQQQQQPQPDLSK. A compositionally biased stretch (low complexity) spans 75-94; sequence QQQQQQQQQQQQQQQQQPQP. Serine 131, serine 152, and serine 159 each carry phosphoserine. Polar residues predominate over residues 148 to 162; that stretch reads NRSTSRPENPKSSTP. The interval 148–201 is disordered; it reads NRSTSRPENPKSSTPAAGCATPTEKEFPQTHSDPSSEQQNRKSQPGTNGGSVKL. Threonine 168 bears the Phosphothreonine mark. Polar residues predominate over residues 176–193; sequence QTHSDPSSEQQNRKSQPG. 4 positions are modified to phosphoserine: serine 221, serine 229, serine 243, and serine 284. Glycyl lysine isopeptide (Lys-Gly) (interchain with G-Cter in SUMO); alternate cross-links involve residues lysine 294 and lysine 310. Residues lysine 294 and lysine 310 each participate in a glycyl lysine isopeptide (Lys-Gly) (interchain with G-Cter in SUMO2); alternate cross-link. 2 positions are modified to phosphoserine: serine 324 and serine 421. The nuclear receptor DNA-binding region spans 434 to 509; that stretch reads PKLCLVCSDE…AGMNLEARKT (76 aa). A Glycyl lysine isopeptide (Lys-Gly) (interchain with G-Cter in ubiquitin) cross-link involves residue lysine 435. 2 consecutive NR C4-type zinc fingers follow at residues 437–457 and 473–497; these read CLVC…CGSC and CAGR…YRKC. N6-acetyllysine occurs at positions 496, 508, 510, and 511. The interaction with CLOCK stretch occupies residues 501–792; the sequence is GMNLEARKTK…NIKKLLFHQK (292 aa). A hinge region spans residues 503 to 538; it reads NLEARKTKKKIKGIQQATAGVSQDTSENANKTIVPA. In terms of domain architecture, NR LBD spans 539-773; it reads ALPQLTPTLV…FPEMLAEIIT (235 aa). An interaction with CRY1 region spans residues 547-712; that stretch reads LVSLLEVIEP…EIRMTYIKEL (166 aa). Lysine 718 participates in a covalent cross-link: Glycyl lysine isopeptide (Lys-Gly) (interchain with G-Cter in SUMO).

This sequence belongs to the nuclear hormone receptor family. NR3 subfamily. In terms of assembly, heteromultimeric cytoplasmic complex with HSP90AA1, HSPA1A/HSPA1B, and FKBP5 or another immunophilin such as PPID, STIP1, or the immunophilin homolog PPP5C. Upon ligand binding FKBP5 dissociates from the complex and FKBP4 takes its place, thereby linking the complex to dynein and mediating transport to the nucleus, where the complex dissociates. Probably forms a complex composed of chaperones HSP90 and HSP70, co-chaperones CDC37, PPP5C, TSC1 and client protein TSC2, CDK4, AKT, RAF1 and NR3C1; this complex does not contain co-chaperones STIP1/HOP and PTGES3/p23. Directly interacts with UNC45A. Binds to DNA as a homodimer, and as heterodimer with NR3C2 or the retinoid X receptor. Binds STAT5A and STAT5B homodimers and heterodimers. Interacts with NRIP1, POU2F1, POU2F2 and TRIM28. Interacts with several coactivator complexes, including the SMARCA4 complex, CREBBP/EP300, TADA2L (Ada complex) and p160 coactivators such as NCOA2 and NCOA6. Interaction with BAG1 inhibits transactivation. Interacts with HEXIM1 and TGFB1I1. Interacts with NCOA1. Interacts with NCOA3, SMARCA4, SMARCC1, SMARCD1, and SMARCE1. Interacts with CLOCK, CRY1 and CRY2 in a ligand-dependent fashion. Interacts with CIART. Interacts with RWDD3. Interacts with UBE2I/UBC9 and this interaction is enhanced in the presence of RWDD3. Interacts with GRIP1. Interacts with NR4A3 (via nuclear receptor DNA-binding domain), represses transcription activity of NR4A3 on the POMC promoter Nur response element (NurRE). Directly interacts with PNRC2 to attract and form a complex with UPF1 and DCP1A; the interaction leads to rapid mRNA degradation. Interacts with GSK3B. Interacts with FNIP1 and FNIP2. Interacts (via C-terminus) with HNRNPU (via C-terminus). Interacts with MCM3AP. Interacts (via domain NR LBD) with HSP90AA1 and HSP90AB1. In the absence of hormonal ligand, interacts with TACC1. Interacts (via NR LBD domain) with ZNF764 (via KRAB domain); the interaction regulates transcription factor activity of NR3C1 by directing its actions toward certain biologic pathways. Post-translationally, acetylation by CLOCK reduces its binding to glucocorticoid response elements and its transcriptional activity. In terms of processing, increased proteasome-mediated degradation in response to glucocorticoids. Phosphorylated in the absence of hormone; becomes hyperphosphorylated in the presence of glucocorticoids. Phosphorylated in the absence of hormone; becomes hyperphosphorylated in the presence of glucocorticoid. The Ser-221, Ser-243 and Ser-421-phosphorylated forms are mainly cytoplasmic, and the Ser-229-phosphorylated form is nuclear. Phosphorylation at Ser-229 increases transcriptional activity. Phosphorylation at Ser-221, Ser-243 and Ser-421 decreases signaling capacity. Phosphorylation at Ser-421 may protect from glucocorticoid-induced apoptosis. Phosphorylation at Ser-221 and Ser-229 is not required in regulation of chromosome segregation. May be dephosphorylated by PPP5C, attenuates NR3C1 action. Post-translationally, sumoylation at Lys-294 and Lys-310 negatively regulates its transcriptional activity. Sumoylation at Lys-718 positively regulates its transcriptional activity in the presence of RWDD3. Sumoylation at Lys-294 and Lys-310 is dispensable whereas sumoylation at Lys-718 is critical for the stimulatory effect of RWDD3 on its transcriptional activity. Heat shock increases sumoylation in a RWDD3-dependent manner. In terms of processing, ubiquitinated. Ubiquitination by UBR5 leads to its degradation: UBR5 specifically recognizes and binds ligand-bound NR3C1 when it is not associated with coactivators (NCOAs). In presence of NCOAs, the UBR5-degron is not accessible, preventing its ubiquitination and degradation. As to expression, expressed in spleen, kidney and liver. Expressed in a circadian manner in the liver. Expressed at highest level in spleen with lesser amounts in kidney and liver.

Its subcellular location is the cytoplasm. The protein localises to the nucleus. It localises to the mitochondrion. It is found in the cytoskeleton. The protein resides in the spindle. Its subcellular location is the microtubule organizing center. The protein localises to the centrosome. It localises to the chromosome. It is found in the nucleoplasm. Receptor for glucocorticoids (GC). Has a dual mode of action: as a transcription factor that binds to glucocorticoid response elements (GRE), both for nuclear and mitochondrial DNA, and as a modulator of other transcription factors. Affects inflammatory responses, cellular proliferation and differentiation in target tissues. Involved in chromatin remodeling. Plays a role in rapid mRNA degradation by binding to the 5' UTR of target mRNAs and interacting with PNRC2 in a ligand-dependent manner which recruits the RNA helicase UPF1 and the mRNA-decapping enzyme DCP1A, leading to RNA decay. Could act as a coactivator for STAT5-dependent transcription upon growth hormone (GH) stimulation and could reveal an essential role of hepatic GR in the control of body growth. In terms of biological role, has transcriptional activation and repression activity. Mediates glucocorticoid-induced apoptosis. Promotes accurate chromosome segregation during mitosis. May act as a tumor suppressor. May play a negative role in adipogenesis through the regulation of lipolytic and antilipogenic gene expression. Functionally, acts as a dominant negative inhibitor of isoform 1. Has intrinsic transcriptional activity independent of isoform Alpha when both isoforms are coexpressed. Loses this transcription modulator function on its own. Has no hormone-binding activity. May play a role in controlling glucose metabolism by maintaining insulin sensitivity. Reduces hepatic gluconeogenesis through down-regulation of PEPCK in an isoform Alpha-dependent manner. Directly regulates STAT1 expression in isoform Alpha-independent manner. This is Glucocorticoid receptor (Nr3c1) from Mus musculus (Mouse).